Here is a 363-residue protein sequence, read N- to C-terminus: Type 3 secretion system translocon protein SctB (363 aa).

Polar residues predominate over residues 1 to 16 (MEIQNTKPTQTLYTDI). Positions 1–30 (MEIQNTKPTQTLYTDISTKQTQSSSETQKS) are disordered. Positions 17–30 (STKQTQSSSETQKS) are enriched in low complexity. Residues 33-73 (YQQIAAHIPLNVGKNPVLTTTLNDDQLLKLSEQVQHDSEII) form an ipgC chaperone binding domain region. A helical transmembrane segment spans residues 99-120 (ISSLSSNAVSLIISVAVLLSAL).

The protein belongs to the SctB/SipC family. As to quaternary structure, the core secretion machinery of the T3SS is composed of approximately 20 different proteins, including cytoplasmic components, a base, an export apparatus and a needle. This subunit is involved in the formation of a pore, called the translocon, in host membrane. Interacts with IpaB/SctE. Interacts with the molecular chaperone IpgC, which prevents premature association with IpaB/SctE within the cytoplasm of Shigella cells. Does not interact with CDC42 or RAC1 GTPases in vitro.

The protein resides in the secreted. It is found in the host membrane. Its activity is regulated as follows. Interaction with the membrane is affected by the pH. Component of the type III secretion system (T3SS), also called injectisome, which is used to inject bacterial effector proteins into eukaryotic host cells. IpaB/SctE and IpaC/SctB are inserted into the host membrane where they form a pore and allow the translocation of effector proteins into the cytosol of target cells. Induction and secretion of IpaC/SctB comprise the final step in triggering the induction of full type III secretion. Functionally, required for efficient dissemination. Necessary for lysis of the two cellular membranes that surround bacteria in protrusions during cell-to-cell spread. Contribute to actin nucleation in vitro, which may be a necessary step in Shigella invasion. In Shigella flexneri, this protein is Type 3 secretion system translocon protein SctB.